A 591-amino-acid chain; its full sequence is Splicing factor U2af large subunit A (591 aa).

A disordered region spans residues 1-215 (MAEHDAPPES…QSKRMSGFDQ (215 aa)). The span at 27–36 (SPQQDAQPLS) shows a compositional bias: polar residues. Composition is skewed to basic and acidic residues over residues 37-79 (SRDR…SRDR) and 157-191 (RERSERREHRDRSDDRDYRRSCDRDAERRDRDRDG). 2 consecutive RRM domains span residues 272-355 (RRVY…RPTD) and 392-470 (DRIF…RANQ).

This sequence belongs to the splicing factor SR family.

The protein resides in the nucleus. In terms of biological role, necessary for the splicing of pre-mRNA. The polypeptide is Splicing factor U2af large subunit A (U2AF65A) (Triticum aestivum (Wheat)).